The primary structure comprises 344 residues: Lipase chaperone (344 aa).

The helical transmembrane segment at 14-34 (AAIYGGVGLAAVAGVAMWSGA) threads the bilayer.

It belongs to the lipase chaperone family.

Its subcellular location is the cell inner membrane. Functionally, may be involved in the folding of the extracellular lipase during its passage through the periplasm. The chain is Lipase chaperone from Burkholderia cenocepacia (strain ATCC BAA-245 / DSM 16553 / LMG 16656 / NCTC 13227 / J2315 / CF5610) (Burkholderia cepacia (strain J2315)).